A 26-amino-acid chain; its full sequence is Mu-theraphotoxin-Phlo2a (26 aa).

3 disulfide bridges follow: cysteine 2–cysteine 16, cysteine 9–cysteine 21, and cysteine 15–cysteine 25.

Belongs to the neurotoxin 30 (phrixotoxin) family. Expressed by the venom gland.

Its subcellular location is the secreted. Functionally, gating-modifier toxin that non-selectively inhibits voltage-gated sodium channel Nav by shifting the threshold for channel activation to more positive potentials. This toxin moderately inhibits human Nav1.2/SCN2A (IC(50)=404 nM), Nav1.5/SCN5A (IC(50)=218 nM) and Nav1.7/SCN9A (IC(50)=333 nM). Inhibition of Nav1.7 is voltage-dependent, with lower inhibition at more positive test pulses. This chain is Mu-theraphotoxin-Phlo2a, found in Phlogius sp. (Tarantula spider).